We begin with the raw amino-acid sequence, 305 residues long: Protein EXORDIUM-like 2 (305 aa).

The signal sequence occupies residues 1–23; that stretch reads MASNYRFAIFLTLFFATAGFSAA. The N-linked (GlcNAc...) asparagine glycan is linked to Asn-44.

This sequence belongs to the EXORDIUM family.

It is found in the secreted. It localises to the extracellular space. The protein localises to the apoplast. Its function is as follows. May play a role in a brassinosteroid-dependent regulation of growth and development. The sequence is that of Protein EXORDIUM-like 2 (EXL2) from Arabidopsis thaliana (Mouse-ear cress).